The primary structure comprises 329 residues: Biotin synthase (329 aa).

The region spanning 36 to 260 (GEIQLCTLLS…VAVARITMPK (225 aa)) is the Radical SAM core domain. Positions 51, 55, and 58 each coordinate [4Fe-4S] cluster. [2Fe-2S] cluster-binding residues include C95, C126, C186, and R264.

Belongs to the radical SAM superfamily. Biotin synthase family. As to quaternary structure, homodimer. [4Fe-4S] cluster is required as a cofactor. It depends on [2Fe-2S] cluster as a cofactor.

The enzyme catalyses (4R,5S)-dethiobiotin + (sulfur carrier)-SH + 2 reduced [2Fe-2S]-[ferredoxin] + 2 S-adenosyl-L-methionine = (sulfur carrier)-H + biotin + 2 5'-deoxyadenosine + 2 L-methionine + 2 oxidized [2Fe-2S]-[ferredoxin]. It functions in the pathway cofactor biosynthesis; biotin biosynthesis; biotin from 7,8-diaminononanoate: step 2/2. Catalyzes the conversion of dethiobiotin (DTB) to biotin by the insertion of a sulfur atom into dethiobiotin via a radical-based mechanism. This Sphingopyxis alaskensis (strain DSM 13593 / LMG 18877 / RB2256) (Sphingomonas alaskensis) protein is Biotin synthase.